A 416-amino-acid polypeptide reads, in one-letter code: Probable carboxypeptidase An18g06210 (416 aa).

The N-terminal stretch at Met1–Ala16 is a signal peptide. N-linked (GlcNAc...) asparagine glycosylation is found at Asn54, Asn70, and Asn129. Asp142 contributes to the Zn(2+) binding site. The Proton acceptor role is filled by Glu174. Glu175 contributes to the Zn(2+) binding site. N-linked (GlcNAc...) asparagine glycans are attached at residues Asn187 and Asn319.

The protein belongs to the peptidase M20A family. Zn(2+) is required as a cofactor.

It localises to the secreted. This Aspergillus niger (strain ATCC MYA-4892 / CBS 513.88 / FGSC A1513) protein is Probable carboxypeptidase An18g06210.